We begin with the raw amino-acid sequence, 263 residues long: Reductase pytE (263 aa).

The protein belongs to the avfA family.

Its pathway is secondary metabolite biosynthesis. In terms of biological role, reductase; part of the gene cluster that mediates the biosynthesis of pyranterreones, a family of antioxidative compounds. The first step of pyranonigrins biosynthesis is performed by the hybrid PKS-NRPS synthetase pytA that condenses 4 malonyl-CoA units ato the acetyl starter unit by the modular PKS of pytA. The acyl chain is then connected to an L-serine through the amide bond by the modular NRPS of pytA. A tetramic acid is formed and released from the PKS-NRPS pytA to give pyranterreone 5 with the help of the thioesterase pytI. Pyranterreone 5 could be methylated by pytC to afford pyranterreone 6. Both pyranterreones 5 and 6 are subsequently oxidized by the FAD-linked oxidoreductase pytB and the cytochrome P450 monooxygenase pytD to form the fused gamma-pyrone core, resulting in pyranterreones 7 and 11, respectively. The hydroxy group at C-8 of pyranterreones 7 and 11 are dehydrated by the aspartyl protease pytH to form a delta-7 double bond to give pyranterreones 3 and 1, 2 accordingly. The exo-methylene of pyranterreone 3 could be reduced into a pendant methyl by reductase pytE to provide pyranterreone 4, also known as cordylactam. Pyranterreone 4 can be reconverted to pyranterreone 3 through pytB-catalyzed dehydrogenation or further oxidized to pyranterreones 9 and 10. This chain is Reductase pytE, found in Aspergillus terreus.